Here is a 342-residue protein sequence, read N- to C-terminus: Dihydroorotase (342 aa).

Zn(2+) is bound by residues histidine 13 and histidine 15. Residues 15–17 (HLR) and asparagine 41 contribute to the substrate site. Lysine 98, histidine 135, and histidine 173 together coordinate Zn(2+). Lysine 98 is modified (N6-carboxylysine). Histidine 135 is a binding site for substrate. Substrate is bound at residue leucine 218. Residue aspartate 246 coordinates Zn(2+). Residue aspartate 246 is part of the active site. Positions 250 and 262 each coordinate substrate.

Belongs to the metallo-dependent hydrolases superfamily. DHOase family. Class II DHOase subfamily. In terms of assembly, homodimer. It depends on Zn(2+) as a cofactor.

It catalyses the reaction (S)-dihydroorotate + H2O = N-carbamoyl-L-aspartate + H(+). It functions in the pathway pyrimidine metabolism; UMP biosynthesis via de novo pathway; (S)-dihydroorotate from bicarbonate: step 3/3. Functionally, catalyzes the reversible cyclization of carbamoyl aspartate to dihydroorotate. The polypeptide is Dihydroorotase (Vibrio cholerae serotype O1 (strain ATCC 39315 / El Tor Inaba N16961)).